We begin with the raw amino-acid sequence, 438 residues long: UDP-N-acetylmuramoylalanine--D-glutamate ligase (438 aa).

An ATP-binding site is contributed by 112–118; that stretch reads GSNGKST.

The protein belongs to the MurCDEF family.

It is found in the cytoplasm. It carries out the reaction UDP-N-acetyl-alpha-D-muramoyl-L-alanine + D-glutamate + ATP = UDP-N-acetyl-alpha-D-muramoyl-L-alanyl-D-glutamate + ADP + phosphate + H(+). Its pathway is cell wall biogenesis; peptidoglycan biosynthesis. Functionally, cell wall formation. Catalyzes the addition of glutamate to the nucleotide precursor UDP-N-acetylmuramoyl-L-alanine (UMA). The protein is UDP-N-acetylmuramoylalanine--D-glutamate ligase of Salmonella choleraesuis (strain SC-B67).